The primary structure comprises 277 residues: Shikimate dehydrogenase (NADP(+)) (277 aa).

Residues 15 to 17 and Thr62 each bind shikimate; that span reads SLS. Lys66 acts as the Proton acceptor in catalysis. Residues Asn87 and Asp102 each coordinate shikimate. Residues 127–131, 151–156, and Ile219 each bind NADP(+); these read GAGGA and NRTVDK. Shikimate is bound at residue Tyr221. Gly242 contacts NADP(+).

Belongs to the shikimate dehydrogenase family. In terms of assembly, homodimer.

The catalysed reaction is shikimate + NADP(+) = 3-dehydroshikimate + NADPH + H(+). It participates in metabolic intermediate biosynthesis; chorismate biosynthesis; chorismate from D-erythrose 4-phosphate and phosphoenolpyruvate: step 4/7. Involved in the biosynthesis of the chorismate, which leads to the biosynthesis of aromatic amino acids. Catalyzes the reversible NADPH linked reduction of 3-dehydroshikimate (DHSA) to yield shikimate (SA). In Bacillus cereus (strain AH187), this protein is Shikimate dehydrogenase (NADP(+)).